The primary structure comprises 196 residues: MADGQMPFSCHYPSRLRRDPFRDSPLPSRLLDDDFGMDPFPDDLTSSWRNWALPRFSTGWPGTLRSGMVPRGPTAAARFGVPAEGRSPPPFPGEPWKVCVNVHSFKPEELMVKTKDGYVEVSGKHEEKQQEGGIVSKNFTKKIQLPAEVDPVTVFASLSPEGLLIIEAPQVPPYSPFGESNFNNELPQDSQEVTCT.

The interval 1 to 35 is disordered; sequence MADGQMPFSCHYPSRLRRDPFRDSPLPSRLLDDDF. Phosphoserine is present on residues S24 and S57. A Phosphothreonine modification is found at T63. Asymmetric dimethylarginine is present on residues R71 and R78. Residues 74-185 enclose the sHSP domain; it reads TAAARFGVPA…PFGESNFNNE (112 aa). S87 is subject to Phosphoserine. Residues 176-196 form a disordered region; the sequence is PFGESNFNNELPQDSQEVTCT. The segment covering 178–196 has biased composition (polar residues); the sequence is GESNFNNELPQDSQEVTCT.

It belongs to the small heat shock protein (HSP20) family. In terms of assembly, monomer. Forms a ternary complex with BAG3 and HSPA1A. Component of the chaperone-assisted selective autophagy (CASA) complex consisting of BAG3, HSPA8/HSC70, HSPB8 and STUB1/CHIP. Interacts with HSPB1. Interacts with DNAJB6. Interacts with BAG3. In terms of processing, phosphorylated.

Its subcellular location is the cytoplasm. The protein resides in the nucleus. Involved in the chaperone-assisted selective autophagy (CASA), a crucial process for protein quality control, particularly in mechanical strained cells and tissues such as muscle. Displays temperature-dependent chaperone activity. The protein is Heat shock protein beta-8 (HSPB8) of Canis lupus familiaris (Dog).